The primary structure comprises 251 residues: Imidazole glycerol phosphate synthase subunit HisF (251 aa).

Catalysis depends on residues aspartate 11 and aspartate 130.

Belongs to the HisA/HisF family. As to quaternary structure, heterodimer of HisH and HisF.

The protein localises to the cytoplasm. It carries out the reaction 5-[(5-phospho-1-deoxy-D-ribulos-1-ylimino)methylamino]-1-(5-phospho-beta-D-ribosyl)imidazole-4-carboxamide + L-glutamine = D-erythro-1-(imidazol-4-yl)glycerol 3-phosphate + 5-amino-1-(5-phospho-beta-D-ribosyl)imidazole-4-carboxamide + L-glutamate + H(+). The protein operates within amino-acid biosynthesis; L-histidine biosynthesis; L-histidine from 5-phospho-alpha-D-ribose 1-diphosphate: step 5/9. Functionally, IGPS catalyzes the conversion of PRFAR and glutamine to IGP, AICAR and glutamate. The HisF subunit catalyzes the cyclization activity that produces IGP and AICAR from PRFAR using the ammonia provided by the HisH subunit. This is Imidazole glycerol phosphate synthase subunit HisF from Pelagibacter ubique (strain HTCC1062).